Here is a 744-residue protein sequence, read N- to C-terminus: Protein pthb1 homolog (744 aa).

Positions 722 to 733 (EHSPKELPKIRE) are enriched in basic and acidic residues. Positions 722–744 (EHSPKELPKIREEEEEEEQQVTA) are disordered. Positions 734-744 (EEEEEEQQVTA) are enriched in acidic residues.

In terms of assembly, part of BBSome complex, that contains bbs-1, bbs-2, bbs-4, bbs-5, osm-12, bbs-8/ttc-8 and bbs-9. Interacts with bbs-1.

In terms of biological role, component of the BBSome complex. The BBSome complex is thought to function as a coat complex required for sorting of specific membrane proteins to the primary cilia. The BBSome complex is required for ciliogenesis but is dispensable for centriolar satellite function. Required for proper BBSome complex assembly and its ciliary localization. Required for cilia biogenesis and both the assembly and movement of intraflagellar transport proteins along the ciliary axoneme. In ciliated sensory neurons, required for the sensation of nitric oxide and avoidance of NO-producing organisms like P.aeruginosa. This is Protein pthb1 homolog from Caenorhabditis elegans.